We begin with the raw amino-acid sequence, 182 residues long: Fatty-acid and retinol-binding protein 2 (182 aa).

The first 17 residues, 1-17, serve as a signal peptide directing secretion; the sequence is MIRAFLVVALASVAVFS. Coiled-coil stretches lie at residues 46–73 and 131–152; these read LKAI…EEEF and TLDS…LSDD.

This sequence belongs to the fatty-acid and retinol-binding protein (FARBP) family.

The protein resides in the secreted. Its function is as follows. Probably binds lipids. This is Fatty-acid and retinol-binding protein 2 (far-2) from Caenorhabditis elegans.